A 251-amino-acid polypeptide reads, in one-letter code: MLQIKNLSKSFPNPYGEPNTIFENLSIDIEDGEFVSIIGSNGTGKSTLLNIISGLIKESSGQITLDSTTITNLAEYKRTQIVSRVFQDPSLGTCPSMTVRENLSLALNKGKLLNLKKCLRHKTNNLEHLLEGISLDLKKYLDIKVQYLSGGQRQSLSLIMSSLASPKVLLLDEHTAALDPKTSNEVIELTDKIVREKNITTLMVTHNLKHALQYGDRLIMLHKGEVVLDVKDKEKENLTVEEILEKFEYAV.

The region spanning 2–248 (LQIKNLSKSF…TVEEILEKFE (247 aa)) is the ABC transporter domain. 39–46 (GSNGTGKS) is an ATP binding site.

This sequence belongs to the ABC transporter superfamily. As to quaternary structure, the complex is probably composed of two ATP-binding proteins (CDR20291_0806), two transmembrane proteins (CDR20291_0807) and a solute-binding protein (CDR20291_0805).

It is found in the cell membrane. It catalyses the reaction L-tyrosine(out) + ATP + H2O = L-tyrosine(in) + ADP + phosphate + H(+). Its function is as follows. Probably part of an ABC transporter complex involved in tyrosine uptake. May also import phenylalanine. Probably responsible for energy coupling to the transport system. This chain is Tyrosine transport ATP-binding protein, found in Clostridioides difficile (strain R20291) (Peptoclostridium difficile).